Reading from the N-terminus, the 477-residue chain is MSPQTETKASVGFKAGVKEYKLTYYTPEYQTKDTDILAAFRVTPQPGVPPEEAGAAVAAESSTGTWTTVWTDGLTSLDRYKGRCYRIERVVGEKDQYIAYVAYPLDLFEEGSVTNMFTSIVGNVFGFKALRALRLEDLRIPPAYVKTFQGPPHGIQVERDKLNKYGRPLLGCTIKPKLGLSAKNYGRAVYECLRGGLDFTKDDENVNSQPFMRWRDRFLFCAEALYKAQAETGEIKGHYLNATAGTCEEMIKRAVFARELGVPIVMHDYLTGGFTANTSLAHYCRDNGLLLHIHRAMHAVIDRQKNHGIHFRVLAKALRMSGGDHIHSGTVVGKLEGERDITLGFVDLLRDDFVEQDRSRGIYFTQDWVSLPGVLPVASGGIHVWHMPALTEIFGDDSVLQFGGGTLGHPWGNPPGAVANRVALEACVKARNEGRDLAQEGNEIIREACKWSPELAAACEVWKEIVFNFAAVDVLDK.

A propeptide spanning residues 1–2 is cleaved from the precursor; sequence MS. P3 is modified (N-acetylproline). The residue at position 14 (K14) is an N6,N6,N6-trimethyllysine. The substrate site is built by N123 and T173. The active-site Proton acceptor is the K175. K177 contributes to the substrate binding site. The Mg(2+) site is built by K201, D203, and E204. At K201 the chain carries N6-carboxylysine. Residue H294 is the Proton acceptor of the active site. Positions 295, 327, and 379 each coordinate substrate.

Belongs to the RuBisCO large chain family. Type I subfamily. As to quaternary structure, heterohexadecamer of 8 large chains and 8 small chains; disulfide-linked. The disulfide link is formed within the large subunit homodimers. Requires Mg(2+) as cofactor. The disulfide bond which can form in the large chain dimeric partners within the hexadecamer appears to be associated with oxidative stress and protein turnover.

The protein localises to the plastid. The protein resides in the chloroplast. The enzyme catalyses 2 (2R)-3-phosphoglycerate + 2 H(+) = D-ribulose 1,5-bisphosphate + CO2 + H2O. The catalysed reaction is D-ribulose 1,5-bisphosphate + O2 = 2-phosphoglycolate + (2R)-3-phosphoglycerate + 2 H(+). Functionally, ruBisCO catalyzes two reactions: the carboxylation of D-ribulose 1,5-bisphosphate, the primary event in carbon dioxide fixation, as well as the oxidative fragmentation of the pentose substrate in the photorespiration process. Both reactions occur simultaneously and in competition at the same active site. The chain is Ribulose bisphosphate carboxylase large chain from Atropa belladonna (Belladonna).